We begin with the raw amino-acid sequence, 955 residues long: RNA polymerase-associated protein RapA (955 aa).

The region spanning Glu163–Glu333 is the Helicase ATP-binding domain. Asp176 to Thr183 provides a ligand contact to ATP. The DEAH box signature appears at Asp279–His282. The Helicase C-terminal domain maps to Arg478–Leu642.

This sequence belongs to the SNF2/RAD54 helicase family. RapA subfamily. As to quaternary structure, interacts with the RNAP. Has a higher affinity for the core RNAP than for the holoenzyme. Its ATPase activity is stimulated by binding to RNAP.

Transcription regulator that activates transcription by stimulating RNA polymerase (RNAP) recycling in case of stress conditions such as supercoiled DNA or high salt concentrations. Probably acts by releasing the RNAP, when it is trapped or immobilized on tightly supercoiled DNA. Does not activate transcription on linear DNA. Probably not involved in DNA repair. This Aeromonas salmonicida (strain A449) protein is RNA polymerase-associated protein RapA.